We begin with the raw amino-acid sequence, 649 residues long: Protein translocase subunit SecA 2 (649 aa).

ATP is bound by residues glutamine 105, 123 to 127 (GEGKT), and aspartate 535.

The protein belongs to the SecA family. Monomer and homodimer. Part of the essential Sec protein translocation apparatus which comprises SecA, SecYEG and auxiliary proteins SecDF-YajC and YidC.

The protein resides in the cell inner membrane. Its subcellular location is the cytoplasm. It catalyses the reaction ATP + H2O + cellular proteinSide 1 = ADP + phosphate + cellular proteinSide 2.. Part of the Sec protein translocase complex. Interacts with the SecYEG preprotein conducting channel. Has a central role in coupling the hydrolysis of ATP to the transfer of proteins into and across the cell membrane, serving both as a receptor for the preprotein-SecB complex and as an ATP-driven molecular motor driving the stepwise translocation of polypeptide chains across the membrane. This chain is Protein translocase subunit SecA 2, found in Magnetococcus marinus (strain ATCC BAA-1437 / JCM 17883 / MC-1).